Reading from the N-terminus, the 340-residue chain is Guanine nucleotide-binding protein subunit beta-4 (340 aa).

Position 2 is an N-acetylserine (Ser2). At Ser2 the chain carries Phosphoserine. 5 WD repeats span residues 53–92 (GHLA…KMHA), 95–134 (LRSS…GNVR), 141–179 (GHTG…QTTT), 182–221 (GHSG…CRQS), and 224–263 (GHIS…ELLL). His266 is subject to Phosphohistidine. WD repeat units follow at residues 268–307 (NIIC…RAGV) and 310–339 (GHDN…LRIW).

It belongs to the WD repeat G protein beta family. G proteins are composed of 3 units, alpha, beta and gamma. Widely expressed in the brain. Highest levels found in the hippocampus and layers v and vi of the neocortex.

Guanine nucleotide-binding proteins (G proteins) are involved as a modulator or transducer in various transmembrane signaling systems. The beta and gamma chains are required for the GTPase activity, for replacement of GDP by GTP, and for G protein-effector interaction. This Rattus norvegicus (Rat) protein is Guanine nucleotide-binding protein subunit beta-4 (Gnb4).